The sequence spans 363 residues: tRNA(Met) cytidine acetate ligase (363 aa).

Residues 7-20 (IAEF…HKYL), Gly96, Asn152, and Arg175 each bind ATP.

The protein belongs to the TmcAL family.

The protein localises to the cytoplasm. The enzyme catalyses cytidine(34) in elongator tRNA(Met) + acetate + ATP = N(4)-acetylcytidine(34) in elongator tRNA(Met) + AMP + diphosphate. Functionally, catalyzes the formation of N(4)-acetylcytidine (ac(4)C) at the wobble position of elongator tRNA(Met), using acetate and ATP as substrates. First activates an acetate ion to form acetyladenylate (Ac-AMP) and then transfers the acetyl group to tRNA to form ac(4)C34. This Streptococcus gordonii (strain Challis / ATCC 35105 / BCRC 15272 / CH1 / DL1 / V288) protein is tRNA(Met) cytidine acetate ligase.